Consider the following 302-residue polypeptide: Sulfate adenylyltransferase subunit 2 2 (302 aa).

The protein belongs to the PAPS reductase family. CysD subfamily. In terms of assembly, heterodimer composed of CysD, the smaller subunit, and CysN.

The catalysed reaction is sulfate + ATP + H(+) = adenosine 5'-phosphosulfate + diphosphate. It participates in sulfur metabolism; hydrogen sulfide biosynthesis; sulfite from sulfate: step 1/3. Its function is as follows. With CysN forms the ATP sulfurylase (ATPS) that catalyzes the adenylation of sulfate producing adenosine 5'-phosphosulfate (APS) and diphosphate, the first enzymatic step in sulfur assimilation pathway. APS synthesis involves the formation of a high-energy phosphoric-sulfuric acid anhydride bond driven by GTP hydrolysis by CysN coupled to ATP hydrolysis by CysD. The chain is Sulfate adenylyltransferase subunit 2 2 from Alkalilimnicola ehrlichii (strain ATCC BAA-1101 / DSM 17681 / MLHE-1).